The sequence spans 541 residues: Chaperonin GroEL (541 aa).

ATP contacts are provided by residues 29-32 (TLGP), 86-90 (DGTTT), G413, 480-482 (NAA), and D496.

Belongs to the chaperonin (HSP60) family. As to quaternary structure, forms a cylinder of 14 subunits composed of two heptameric rings stacked back-to-back. Interacts with the co-chaperonin GroES.

It localises to the cytoplasm. The catalysed reaction is ATP + H2O + a folded polypeptide = ADP + phosphate + an unfolded polypeptide.. In terms of biological role, together with its co-chaperonin GroES, plays an essential role in assisting protein folding. The GroEL-GroES system forms a nano-cage that allows encapsulation of the non-native substrate proteins and provides a physical environment optimized to promote and accelerate protein folding. In Gardnerella vaginalis, this protein is Chaperonin GroEL.